The primary structure comprises 245 residues: 1-(5-phosphoribosyl)-5-[(5-phosphoribosylamino)methylideneamino] imidazole-4-carboxamide isomerase (245 aa).

Residue Asp-7 is the Proton acceptor of the active site. Asp-129 functions as the Proton donor in the catalytic mechanism.

This sequence belongs to the HisA/HisF family.

It is found in the cytoplasm. The catalysed reaction is 1-(5-phospho-beta-D-ribosyl)-5-[(5-phospho-beta-D-ribosylamino)methylideneamino]imidazole-4-carboxamide = 5-[(5-phospho-1-deoxy-D-ribulos-1-ylimino)methylamino]-1-(5-phospho-beta-D-ribosyl)imidazole-4-carboxamide. It participates in amino-acid biosynthesis; L-histidine biosynthesis; L-histidine from 5-phospho-alpha-D-ribose 1-diphosphate: step 4/9. This is 1-(5-phosphoribosyl)-5-[(5-phosphoribosylamino)methylideneamino] imidazole-4-carboxamide isomerase from Shewanella loihica (strain ATCC BAA-1088 / PV-4).